We begin with the raw amino-acid sequence, 391 residues long: S-adenosylmethionine synthase (391 aa).

An ATP-binding site is contributed by His14. Mg(2+) is bound at residue Asp16. Glu42 is a K(+) binding site. Glu55 and Gln98 together coordinate L-methionine. Residues 98 to 108 form a flexible loop region; sequence QSVDIAMGVDE. Residues 172–174, 238–239, Asp247, 253–254, Ala270, and Lys274 contribute to the ATP site; these read DGK, RF, and RK. Residue Asp247 coordinates L-methionine. Residue Lys278 coordinates L-methionine.

The protein belongs to the AdoMet synthase family. In terms of assembly, homotetramer; dimer of dimers. The cofactor is Mg(2+). K(+) serves as cofactor.

It is found in the cytoplasm. It carries out the reaction L-methionine + ATP + H2O = S-adenosyl-L-methionine + phosphate + diphosphate. It functions in the pathway amino-acid biosynthesis; S-adenosyl-L-methionine biosynthesis; S-adenosyl-L-methionine from L-methionine: step 1/1. Functionally, catalyzes the formation of S-adenosylmethionine (AdoMet) from methionine and ATP. The overall synthetic reaction is composed of two sequential steps, AdoMet formation and the subsequent tripolyphosphate hydrolysis which occurs prior to release of AdoMet from the enzyme. The polypeptide is S-adenosylmethionine synthase (Clostridium botulinum (strain Langeland / NCTC 10281 / Type F)).